The primary structure comprises 284 residues: CBY1-interacting BAR domain-containing protein 1-A (284 aa).

The transit peptide at 1 to 48 (MSQTPEARARDNQTRQIQESVNNVEKHFGELCQIFAGYVRKTARLRDK) directs the protein to the mitochondrion. The BAR-like stretch occupies residues 11–221 (DNQTRQIQES…DIDEEEDLEV (211 aa)). Coiled coils occupy residues 142-184 (RQII…IKKL) and 260-284 (NRQK…EDEN). The segment covering 242–261 (SRTGSTSRGPSVISQPPGNR) has biased composition (polar residues). Positions 242-284 (SRTGSTSRGPSVISQPPGNRQKNRIEDEDEEEEDDENSTEDEN) are disordered. Acidic residues predominate over residues 267-284 (EDEDEEEEDDENSTEDEN).

It belongs to the CIBAR family.

It localises to the cytoplasm. The protein localises to the cytoskeleton. It is found in the microtubule organizing center. The protein resides in the centrosome. Its subcellular location is the centriole. It localises to the nucleus. The protein localises to the mitochondrion inner membrane. It is found in the cell projection. The protein resides in the cilium. Its subcellular location is the flagellum. Functionally, plays a critical role in regulating mitochondrial ultrastructure and function by maintaining the integrity of mitochondrial morphology, particularly the organization of cristae. Plays a crucial role in ciliogenesis. Plays a key role in the correct positioning of the annulus, a septin-based ring structure in the sperm flagellum, serving both as a physical barrier and a membrane diffusion barrier that separates the midpiece (MP) from the principal piece (PP). In Xenopus laevis (African clawed frog), this protein is CBY1-interacting BAR domain-containing protein 1-A.